Reading from the N-terminus, the 91-residue chain is Chorion class B protein M3A5 (91 aa).

The segment at 1 to 51 (VASENRYEGTVGVSGNLPFLGTADVAGEFPTAGIGEILYGCGNGAVGITRE) is central domain. The interval 52–91 (GGLGYGAGYGGGYGLGYGGYGGGYGLGYGGYGGCGCGCGY) is right arm (Gly-rich tandem repeats).

The protein belongs to the chorion protein family.

Its function is as follows. This protein is one of many from the eggshell of the silk moth. The sequence is that of Chorion class B protein M3A5 from Bombyx mori (Silk moth).